A 97-amino-acid chain; its full sequence is Protein YukE (97 aa).

Positions 21–94 (VESQEVLNQV…ESTDQDIANQ (74 aa)) form a coiled coil.

This sequence belongs to the WXG100 family. sagEsxA-like subfamily. In terms of assembly, homodimer.

The protein resides in the secreted. Required to deliver LXG toxins to target cells. This is Protein YukE (yukE) from Bacillus subtilis (strain 168).